Reading from the N-terminus, the 285-residue chain is MLKYRLISAFVLIPVVIAALFLLPPVGFAIVTLVVCMLAAWEWGQLSGFTTRSQRVWLAVLCGLLLALMLFLLPEYHRNIHQPLVEISLWASLGWWIVALLLVLFYPGSAAIWRNSKTLRLIFGVLTIVPFFWGMLALRAWHYDENHYSGAIWLLYVMILVWGADSGAYMFGKLFGKHKLAPKVSPGKTWQGFIGGLATAAVISWGYGMWANLDVAPVTLLICSIVAALASVLGDLTESMFKREAGIKDSGHLIPGHGGILDRIDSLTAAVPVFACLLLLVFRTL.

A run of 8 helical transmembrane segments spans residues 10–30 (FVLI…GFAI), 56–76 (VWLA…LPEY), 93–113 (LGWW…AAIW), 121–141 (LIFG…LRAW), 151–171 (AIWL…AYMF), 190–210 (WQGF…YGMW), 213–233 (LDVA…ASVL), and 264–284 (IDSL…VFRT).

The protein belongs to the CDS family.

It localises to the cell inner membrane. The enzyme catalyses a 1,2-diacyl-sn-glycero-3-phosphate + CTP + H(+) = a CDP-1,2-diacyl-sn-glycerol + diphosphate. It functions in the pathway phospholipid metabolism; CDP-diacylglycerol biosynthesis; CDP-diacylglycerol from sn-glycerol 3-phosphate: step 3/3. The sequence is that of Phosphatidate cytidylyltransferase (cdsA) from Escherichia coli O157:H7.